Here is a 97-residue protein sequence, read N- to C-terminus: Large ribosomal subunit protein uL23 (97 aa).

It belongs to the universal ribosomal protein uL23 family. Part of the 50S ribosomal subunit. Contacts protein L29, and trigger factor when it is bound to the ribosome.

One of the early assembly proteins it binds 23S rRNA. One of the proteins that surrounds the polypeptide exit tunnel on the outside of the ribosome. Forms the main docking site for trigger factor binding to the ribosome. This is Large ribosomal subunit protein uL23 from Lactococcus lactis subsp. cremoris (strain SK11).